The chain runs to 524 residues: MIQQALLSVSDKTGIVDFARALHGAGVKLLSTGGTAKLLAESGLPVTEVADYTGFPEMLDGRVKTLHPKVHGGILARRDLPEHMAALSQHGIPTIDLLVVNLYPFQQTVAKDECTLADAIENIDIGGPTMLRSAAKNHRDVTVIVDPADYATVLAEMQANGNTVGYDTNFMLAKKVFAHTAQYDGAITNYLTSLGQDKSHSTRSQYPQTLNLAFEQVQEMRYGENPHQSAAFYRDLKAVDGALANYAQLQGKELSYNNIADADAAWECVKSFDPAKGAACVIIKHANPCGVAIGGTAQEAYEKAFKTDSTSAFGGIIAFNVPLDEAAAQVVAKQFVEVLIAPSFSAGARTVFAAKQNVRLLEIPLGKGVNAYDFKRVGGGLLVQSPDAKNVQSAELRVVTKRHPTPKEMDDLLFAWRVAKFVKSNAIVFCGGGMTLGVGAGQMSRVDSARIASIKAQNAGLMLSGSAVASDAFFPFRDGLDVVVDAGASCVIQPGGSVRDDEVIAAADERNVAMIFTGTRHFRH.

The MGS-like domain maps to methionine 1–valine 145.

It belongs to the PurH family.

The catalysed reaction is (6R)-10-formyltetrahydrofolate + 5-amino-1-(5-phospho-beta-D-ribosyl)imidazole-4-carboxamide = 5-formamido-1-(5-phospho-D-ribosyl)imidazole-4-carboxamide + (6S)-5,6,7,8-tetrahydrofolate. The enzyme catalyses IMP + H2O = 5-formamido-1-(5-phospho-D-ribosyl)imidazole-4-carboxamide. It participates in purine metabolism; IMP biosynthesis via de novo pathway; 5-formamido-1-(5-phospho-D-ribosyl)imidazole-4-carboxamide from 5-amino-1-(5-phospho-D-ribosyl)imidazole-4-carboxamide (10-formyl THF route): step 1/1. The protein operates within purine metabolism; IMP biosynthesis via de novo pathway; IMP from 5-formamido-1-(5-phospho-D-ribosyl)imidazole-4-carboxamide: step 1/1. The protein is Bifunctional purine biosynthesis protein PurH of Ralstonia nicotianae (strain ATCC BAA-1114 / GMI1000) (Ralstonia solanacearum).